Here is an 89-residue protein sequence, read N- to C-terminus: Large ribosomal subunit protein bL27 (89 aa).

Residues 1–21 (MAHKKAGGSSRNGRDSKGKRL) are disordered.

The protein belongs to the bacterial ribosomal protein bL27 family.

In Bradyrhizobium sp. (strain ORS 278), this protein is Large ribosomal subunit protein bL27.